Here is a 357-residue protein sequence, read N- to C-terminus: Ribosomal RNA large subunit methyltransferase M (357 aa).

S-adenosyl-L-methionine-binding positions include Ser190, 223 to 226 (APGG), Asp242, Asp262, and Asp278. Residue Lys307 is the Proton acceptor of the active site.

This sequence belongs to the class I-like SAM-binding methyltransferase superfamily. RNA methyltransferase RlmE family. RlmM subfamily. As to quaternary structure, monomer.

It localises to the cytoplasm. The enzyme catalyses cytidine(2498) in 23S rRNA + S-adenosyl-L-methionine = 2'-O-methylcytidine(2498) in 23S rRNA + S-adenosyl-L-homocysteine + H(+). In terms of biological role, catalyzes the 2'-O-methylation at nucleotide C2498 in 23S rRNA. This chain is Ribosomal RNA large subunit methyltransferase M, found in Chromohalobacter salexigens (strain ATCC BAA-138 / DSM 3043 / CIP 106854 / NCIMB 13768 / 1H11).